A 301-amino-acid chain; its full sequence is Amylovoran biosynthesis glycosyltransferase AmsB (301 aa).

The protein belongs to the glycosyltransferase 2 family.

It functions in the pathway glycan metabolism; exopolysaccharide biosynthesis. Involved in the biosynthesis of amylovoran, which functions as a virulence factor. May function as a glycosyl transferase which transfers galactose from UDP-galactose to a lipid-linked amylovoran-subunit precursor. The chain is Amylovoran biosynthesis glycosyltransferase AmsB (amsB) from Erwinia amylovora (Fire blight bacteria).